The primary structure comprises 154 residues: MASVSTHGNQEKSPHLPPLSKQSLLFCPKSKLHIHRGEIAKIIRECQEESFWKRALPFSLISMLVTQGLVHQGYLAANPRFGSLPKVALAGLLGFGLGKASYIRVCQSKFHSFEDQLRGAGFGPEHNRHCLLTCEDCKTRRGLSEKAGSQPSAS.

Residues 1–120 (MASVSTHGNQ…HSFEDQLRGA (120 aa)) enclose the OCIA domain. The residue at position 41 (K41) is an N6-acetyllysine.

Interacts (via OCIA domain) with OCIAD1/ASRIJ and STAT3. As to expression, abundant in kidney, liver and brain.

The protein resides in the endosome. The protein localises to the mitochondrion. It is found in the mitochondrion inner membrane. Has an essential role in the assembly of mitochondrial respiratory chain complex III. Is also required for STAT3 activation and plays a role in cell migration. The sequence is that of OCIA domain-containing protein 2 (Ociad2) from Mus musculus (Mouse).